The chain runs to 525 residues: Cytochrome P450 monooxygenase ltmJ (525 aa).

A helical transmembrane segment spans residues 21-43 (LTWWQTIVSFIIFCIMCSWLPGN). N-linked (GlcNAc...) asparagine glycosylation is present at asparagine 136. Residue cysteine 465 participates in heme binding.

Belongs to the cytochrome P450 family. It depends on heme as a cofactor.

Its subcellular location is the membrane. It functions in the pathway secondary metabolite biosynthesis. In terms of biological role, cytochrome P450 monooxygenase; part of the gene clusters that mediates the biosynthesis of lolitrems, indole-diterpene mycotoxins that are potent tremorgens in mammals, and are synthesized by clavicipitaceous fungal endophytes in association with their grass hosts. The geranylgeranyl diphosphate (GGPP) synthase ltmG is proposed to catalyze the first step in lolitrem biosynthesis. LtmG catalyzes a series of iterative condensations of isopentenyl diphosphate (IPP) with dimethylallyl diphosphate (DMAPP), geranyl diphosphate (GPP), and farnesyl diphosphate (FPP), to form GGPP. GGPP then condenses with indole-3-glycerol phosphate to form 3-geranylgeranylindole, an acyclic intermediate, to be incorporated into paxilline. Either ltmG or ltmC could be responsible for this step, as both are putative prenyl transferases. The FAD-dependent monooxygenase ltmM then catalyzes the epoxidation of the two terminal alkenes of the geranylgeranyl moiety, which is subsequently cyclized by ltmB, to paspaline. The cytochrome P450 monooxygenases ltmQ and ltmP can sequentially oxidize paspaline to terpendole E and terpendole F. Alternatively, ltmP converts paspaline to an intermediate which is oxidized by ltmQ to terpendole F. LtmF, ltmK, ltmE and ltmJ appear to be unique to the epichloe endophytes. The prenyltransferase ltmF is involved in the 27-hydroxyl-O-prenylation. The cytochrome P450 monooxygenase ltmK is required for the oxidative acetal ring formation. The multi-functional prenyltransferase ltmE is required for C20- and C21-prenylations of the indole ring of paspalanes and acts together with the cytochrome P450 monooxygenase ltmJ to yield lolitremanes by multiple oxidations and ring closures. The stereoisomer pairs of lolitriol and lolitrem N or lolitrem B and lolitrem F may be attributed to variations in the way in which ring closure can occur under the action of ltmJ. While the major product of this pathway is lolitrem B, the prenyl transferases and cytochrome P450 monooxygenases identified in this pathway have a remarkable versatility in their regio- and stereo-specificities to generate a diverse range of metabolites that are products of a metabolic grid rather than a linear pathway. The sequence is that of Cytochrome P450 monooxygenase ltmJ (ltmJ) from Epichloe festucae var. lolii (Neotyphodium lolii).